Here is a 395-residue protein sequence, read N- to C-terminus: uncharacterized protein (395 aa).

Helical transmembrane passes span isoleucine 15 to phenylalanine 35, tryptophan 56 to isoleucine 76, phenylalanine 86 to valine 106, alanine 131 to tryptophan 151, tryptophan 175 to alanine 195, leucine 254 to valine 274, isoleucine 298 to valine 318, and valine 348 to isoleucine 368.

The protein localises to the cell membrane. This is an uncharacterized protein from Mycoplasma pneumoniae (strain ATCC 29342 / M129 / Subtype 1) (Mycoplasmoides pneumoniae).